The chain runs to 893 residues: Translation initiation factor IF-2 (893 aa).

2 disordered regions span residues 51-203 (KEHG…AEAE) and 216-299 (EENE…TSMQ). Basic and acidic residues-rich tracts occupy residues 102-203 (ALEE…AEAE), 216-238 (EENE…DADY), and 245-261 (HARE…EQQP). The 170-residue stretch at 392–561 (GRAPVVTIMG…LLQSEVLELT (170 aa)) folds into the tr-type G domain. Residues 401-408 (GHVDHGKT) form a G1 region. 401–408 (GHVDHGKT) serves as a coordination point for GTP. The segment at 426 to 430 (GITQH) is G2. Positions 447–450 (DTPG) are G3. Residues 447–451 (DTPGH) and 501–504 (NKID) contribute to the GTP site. Positions 501–504 (NKID) are G4. Residues 537-539 (SAK) form a G5 region.

The protein belongs to the TRAFAC class translation factor GTPase superfamily. Classic translation factor GTPase family. IF-2 subfamily.

The protein localises to the cytoplasm. Functionally, one of the essential components for the initiation of protein synthesis. Protects formylmethionyl-tRNA from spontaneous hydrolysis and promotes its binding to the 30S ribosomal subunits. Also involved in the hydrolysis of GTP during the formation of the 70S ribosomal complex. The protein is Translation initiation factor IF-2 of Aliivibrio fischeri (strain ATCC 700601 / ES114) (Vibrio fischeri).